The primary structure comprises 1515 residues: Glutamate synthase [NADPH] large chain (1515 aa).

Residues 1–36 (MTTELNQGEQFVADFRANAAALTTANAYNPEDEHDA) constitute a propeptide that is removed on maturation. Cys-37 functions as the For GATase activity in the catalytic mechanism. Residues 37-432 (CGVGFIAAID…PGEMIAVDLQ (396 aa)) enclose the Glutamine amidotransferase type-2 domain. A disordered region spans residues 916–937 (AKSDSGEGGEDPARFRPDKNGD). Residues 926 to 936 (DPARFRPDKNG) are compositionally biased toward basic and acidic residues. FMN contacts are provided by residues 1085-1142 (LSEV…IMVR) and 1086-1142 (SEVH…IMVR). [3Fe-4S] cluster is bound by residues Cys-1138, Cys-1144, and Cys-1149.

Belongs to the glutamate synthase family. Aggregate of 4 catalytic active heterodimers, consisting of a large and a small subunit. It depends on [3Fe-4S] cluster as a cofactor. Requires FAD as cofactor. FMN is required as a cofactor.

The catalysed reaction is 2 L-glutamate + NADP(+) = L-glutamine + 2-oxoglutarate + NADPH + H(+). The protein operates within amino-acid biosynthesis; L-glutamate biosynthesis via GLT pathway; L-glutamate from 2-oxoglutarate and L-glutamine (NADP(+) route): step 1/1. Its pathway is energy metabolism; nitrogen metabolism. This is Glutamate synthase [NADPH] large chain (gltB) from Azospirillum brasilense.